Reading from the N-terminus, the 696-residue chain is DNA ligase (696 aa).

NAD(+) is bound by residues 41 to 45 (DGQYD), 90 to 91 (SL), and Glu120. The active-site N6-AMP-lysine intermediate is Lys122. Residues Arg143, Glu180, Lys296, and Lys320 each contribute to the NAD(+) site. Residues Cys414, Cys417, Cys433, and Cys439 each contribute to the Zn(2+) site. The 90-residue stretch at 603–692 (STPRTLEGLT…PDAVARPAEE (90 aa)) folds into the BRCT domain.

This sequence belongs to the NAD-dependent DNA ligase family. LigA subfamily. It depends on Mg(2+) as a cofactor. Requires Mn(2+) as cofactor.

The enzyme catalyses NAD(+) + (deoxyribonucleotide)n-3'-hydroxyl + 5'-phospho-(deoxyribonucleotide)m = (deoxyribonucleotide)n+m + AMP + beta-nicotinamide D-nucleotide.. Functionally, DNA ligase that catalyzes the formation of phosphodiester linkages between 5'-phosphoryl and 3'-hydroxyl groups in double-stranded DNA using NAD as a coenzyme and as the energy source for the reaction. It is essential for DNA replication and repair of damaged DNA. This chain is DNA ligase, found in Kineococcus radiotolerans (strain ATCC BAA-149 / DSM 14245 / SRS30216).